The following is a 127-amino-acid chain: Aspartate 1-decarboxylase (127 aa).

Catalysis depends on Ser-25, which acts as the Schiff-base intermediate with substrate; via pyruvic acid. Ser-25 carries the post-translational modification Pyruvic acid (Ser). Thr-57 provides a ligand contact to substrate. The active-site Proton donor is Tyr-58. Position 73-75 (73-75) interacts with substrate; sequence GAA.

This sequence belongs to the PanD family. As to quaternary structure, heterooctamer of four alpha and four beta subunits. It depends on pyruvate as a cofactor. In terms of processing, is synthesized initially as an inactive proenzyme, which is activated by self-cleavage at a specific serine bond to produce a beta-subunit with a hydroxyl group at its C-terminus and an alpha-subunit with a pyruvoyl group at its N-terminus.

The protein localises to the cytoplasm. The enzyme catalyses L-aspartate + H(+) = beta-alanine + CO2. The protein operates within cofactor biosynthesis; (R)-pantothenate biosynthesis; beta-alanine from L-aspartate: step 1/1. Functionally, catalyzes the pyruvoyl-dependent decarboxylation of aspartate to produce beta-alanine. The protein is Aspartate 1-decarboxylase of Neisseria meningitidis serogroup B (strain ATCC BAA-335 / MC58).